Here is a 1997-residue protein sequence, read N- to C-terminus: Receptor-type tyrosine-protein phosphatase beta (1997 aa).

Residues 1-22 form the signal peptide; sequence MLSHGAGLALWITLSLLQTGLA. 17 Fibronectin type-III domains span residues 23-111, 112-207, 203-288, 291-378, 379-471, 467-552, 556-641, 642-729, 730-829, 819-906, 909-1001, 995-1083, 1087-1175, 1173-1260, 1260-1356, 1357-1448, and 1458-1554; these read EPER…TDPL, PPAR…SPVK, PSPV…VRTA, EVSN…TFPD, KVAN…LAVL, PLAV…KGRT, QVTD…EGRT, VPSS…QERT, VPDK…TLRN, PEPV…GFTV, AVKN…VQGV, PASV…EGRT, AVTD…VPAS, PASV…SRTA, APSP…TKPD, KIQN…IDRP, and NEKD…EMES. Residues 23–1621 are Extracellular-facing; that stretch reads EPERCNFTLA…ESEPLFGAIE (1599 aa). Residues N28, N53, N75, N172, N198, N267, N321, N414, N421, N479, N544, N574, N598, N652, N721, and N829 are each glycosylated (N-linked (GlcNAc...) asparagine). Residues N1040, N1096, N1163, N1185, N1212, N1274, N1367, N1470, N1474, and N1518 are each glycosylated (N-linked (GlcNAc...) asparagine). A helical membrane pass occupies residues 1622–1642; the sequence is GVSAGLFLIGMLVAVVALLIC. The Cytoplasmic segment spans residues 1643–1997; the sequence is RQKVSHGRER…YHRDPVYSRH (355 aa). One can recognise a Tyrosine-protein phosphatase domain in the interval 1703-1963; it reads LSKEYEELKD…VYLHQCVRDV (261 aa). Substrate is bound by residues D1870, 1904–1910, and Q1948; that span reads CSAGVGR. The active-site Phosphocysteine intermediate is the C1904. Position 1981 is a phosphotyrosine (Y1981).

This sequence belongs to the protein-tyrosine phosphatase family. Receptor class 3 subfamily. In terms of assembly, monomer. Interacts with TEK. Interacts via fibronectin type-III 17 domain with CDH5. Detected in a complex with CNTN1 and NRCAM. Interacts (phosphorylated form) with FYN and GRB2. Interacts with IGFBP2.

Its subcellular location is the membrane. The enzyme catalyses O-phospho-L-tyrosyl-[protein] + H2O = L-tyrosyl-[protein] + phosphate. Functionally, plays an important role in blood vessel remodeling and angiogenesis. Not necessary for the initial formation of blood vessels, but is essential for their maintenance and remodeling. Can induce dephosphorylation of TEK/TIE2, CDH5/VE-cadherin and KDR/VEGFR-2. Regulates angiopoietin-TIE2 signaling in endothelial cells. Acts as a negative regulator of TIE2, and controls TIE2 driven endothelial cell proliferation, which in turn affects blood vessel remodeling during embryonic development and determines blood vessel size during perinatal growth. Essential for the maintenance of endothelial cell contact integrity and for the adhesive function of VE-cadherin in endothelial cells and this requires the presence of plakoglobin. The chain is Receptor-type tyrosine-protein phosphatase beta (PTPRB) from Homo sapiens (Human).